The chain runs to 193 residues: Sporulation-specific transcriptional regulator GerR (193 aa).

One can recognise an HTH myb-type domain in the interval 1-61 (MTITRQDAWT…RWNSYVRKQY (61 aa)). The segment at residues 35-57 (FEEVGRALTRTAAACGFRWNSYV) is a DNA-binding region (H-T-H motif). Residues 122-177 (AQEFQLEREKLKEQIQSLQKELEDLRSENQTLRNQLEMTEEDYKALIDIMDRARKM) are a coiled coil.

This sequence belongs to the RsfA transcriptional regulator family.

Functionally, transcriptional factor that regulates the expression of several late sporulation genes. Controls genes of both sigma-E and sigma-K regulons, acting alone on some genes and in conjunction with SpoIIID or GerE on others. Regulates, directly or indirectly, the expression of genes encoding coat proteins such as cgeA, cotB, cotC, cotG, cotU and cotY. Controls late sporulation genes in two ways: directly, by binding to the promoter region of genes such as cotB, cotU and spoVIF, and acting directly on their transcription, and indirectly, through the activation of SpoVIF, which stabilizes the transcriptional activator GerE and consequently induces the expression of the GerE-dependent genes, such as cotC and cotG. Its effect is strongly positive on spoVIF, cotC, and cotG, weakly positive on cotB, and negative on cotU. This Bacillus subtilis (strain 168) protein is Sporulation-specific transcriptional regulator GerR.